Reading from the N-terminus, the 414-residue chain is Phosphopentomutase (414 aa).

6 residues coordinate Mn(2+): Asp-10, Asp-309, His-314, Asp-350, His-351, and His-362.

Belongs to the phosphopentomutase family. It depends on Mn(2+) as a cofactor.

Its subcellular location is the cytoplasm. It catalyses the reaction 2-deoxy-alpha-D-ribose 1-phosphate = 2-deoxy-D-ribose 5-phosphate. The catalysed reaction is alpha-D-ribose 1-phosphate = D-ribose 5-phosphate. The protein operates within carbohydrate degradation; 2-deoxy-D-ribose 1-phosphate degradation; D-glyceraldehyde 3-phosphate and acetaldehyde from 2-deoxy-alpha-D-ribose 1-phosphate: step 1/2. Functionally, isomerase that catalyzes the conversion of deoxy-ribose 1-phosphate (dRib-1-P) and ribose 1-phosphate (Rib-1-P) to deoxy-ribose 5-phosphate (dRib-5-P) and ribose 5-phosphate (Rib-5-P), respectively. The protein is Phosphopentomutase of Hahella chejuensis (strain KCTC 2396).